The following is a 132-amino-acid chain: uncharacterized protein (132 aa).

The helical transmembrane segment at 10–30 (LVLFFTIILIALCPFVYYLWD) threads the bilayer. Residues 50–79 (KNCSTEIEHAIEEHKRKNKEKKEAKEKRLA) adopt a coiled-coil conformation.

It localises to the membrane. This is an uncharacterized protein from Invertebrate iridescent virus 6 (IIV-6).